Consider the following 342-residue polypeptide: tRNA N6-adenosine threonylcarbamoyltransferase (342 aa).

His-115 and His-119 together coordinate Fe cation. Substrate-binding positions include 137–141 (IVSGG), Asp-170, Gly-183, Asp-187, and Asn-276. Position 304 (Asp-304) interacts with Fe cation.

The protein belongs to the KAE1 / TsaD family. It depends on Fe(2+) as a cofactor.

It is found in the cytoplasm. It catalyses the reaction L-threonylcarbamoyladenylate + adenosine(37) in tRNA = N(6)-L-threonylcarbamoyladenosine(37) in tRNA + AMP + H(+). Required for the formation of a threonylcarbamoyl group on adenosine at position 37 (t(6)A37) in tRNAs that read codons beginning with adenine. Is involved in the transfer of the threonylcarbamoyl moiety of threonylcarbamoyl-AMP (TC-AMP) to the N6 group of A37, together with TsaE and TsaB. TsaD likely plays a direct catalytic role in this reaction. The sequence is that of tRNA N6-adenosine threonylcarbamoyltransferase from Staphylococcus haemolyticus (strain JCSC1435).